Here is a 588-residue protein sequence, read N- to C-terminus: Progranulin (588 aa).

The first 17 residues, 1 to 17, serve as a signal peptide directing secretion; the sequence is MWILVSWLALVARLVAG. Asn38 is a glycosylation site (N-linked (GlcNAc...) asparagine). 12 cysteine pairs are disulfide-bonded: Cys125/Cys138, Cys132/Cys148, Cys281/Cys293, Cys287/Cys303, Cys294/Cys311, Cys304/Cys318, Cys312/Cys325, Cys319/Cys332, Cys363/Cys375, Cys369/Cys385, Cys394/Cys407, and Cys401/Cys413. The N-linked (GlcNAc...) asparagine glycan is linked to Asn372. Asn525 is a glycosylation site (N-linked (GlcNAc...) asparagine).

Belongs to the granulin family. Progranulin is secreted as a homodimer. Interacts with SLPI; interaction protects progranulin from proteolysis. Interacts (via region corresponding to granulin-7 peptide) with CTSD; stabilizes CTSD and increases its proteolytic activity. Interacts (via region corresponding to granulin-7 peptide) with SORT1; this interaction mediates endocytosis and lysosome delivery of progranulin; interaction occurs at the neuronal cell surface in a stressed nervous system. Interacts with PSAP; facilitates lysosomal delivery of progranulin from the extracellular space and the biosynthetic pathway. Forms a complex with PSAP and M6PR; PSAP bridges the binding between progranulin and M6PR. Forms a complex with PSAP and SORT1; progranulin bridges the interaction between PSAP and SORT1; facilitates lysosomal targeting of PSAP via SORT1; interaction enhances PSAP uptake in primary cortical neurons. Interacts (via regions corresponding to granulin-2 and granulin-7 peptides) with GBA1; this interaction prevents aggregation of GBA1-SCARB2 complex via interaction with HSPA1A upon stress. Interacts (via region corresponding to granulin-7 peptide) with HSPA1A; mediates recruitment of HSPA1A to GBA1 and prevents GBA1 aggregation in response to stress. Post-translationally, cleaved by ELANE; proteolysis is blocked by SLPI and is concentration- and time-dependent and induces CXCL8/IL-8 production; granulin-3 and granulin-4 are resistant to ELANE. Cleaved by CTSL in lysosome thus regulating the maturation and turnover of progranulin within the lysosome. As to expression, ubiquitous; most abundant in the spleen and several tissues of endocrine significance.

The protein localises to the secreted. Its subcellular location is the lysosome. In terms of biological role, secreted protein that acts as a key regulator of lysosomal function and as a growth factor involved in inflammation, wound healing and cell proliferation. Regulates protein trafficking to lysosomes, and also the activity of lysosomal enzymes. Also facilitates the acidification of lysosomes, causing degradation of mature CTSD by CTSB. In addition, functions as a wound-related growth factor that acts directly on dermal fibroblasts and endothelial cells to promote division, migration and the formation of capillary-like tubule structures. Also promotes epithelial cell proliferation by blocking TNF-mediated neutrophil activation preventing release of oxidants and proteases. Moreover, modulates inflammation in neurons by preserving neurons survival, axonal outgrowth and neuronal integrity. Inhibits epithelial cell proliferation and induces epithelial cells to secrete IL-8. Its function is as follows. Stabilizes CTSD through interaction with CTSD leading to maintain its aspartic-type peptidase activity. The sequence is that of Progranulin (Grn) from Rattus norvegicus (Rat).